The chain runs to 441 residues: Protein cortex (441 aa).

WD repeat units follow at residues 110–148 (SITS…VDQG), 149–187 (QTMF…QFVQ), 193–233 (IQIC…KSLV), 235–276 (IEGA…RFMK), 277–320 (TNEI…KLRQ), 345–379 (SLWS…ESHT), and 380–420 (GLNR…KILA). A D-box motif is present at residues 379-390 (TGLNRIRTMVFS).

It belongs to the WD repeat CORT family.

The protein localises to the cytoplasm. Functionally, controls wing pigmentation patterning, possibly by regulating scale cell development. Probably acts as an activator of the anaphase promoting complex/cyclosome (APC/C) that promotes the ubiquitin ligase activity and substrate specificity of the APC/C. The chain is Protein cortex from Biston betularia (Pepper-and-salt geometer moth).